The chain runs to 162 residues: Deoxyuridine 5'-triphosphate nucleotidohydrolase (162 aa).

S11 is subject to Phosphoserine. DUTP-binding positions include 83 to 85 (RSG), 97 to 103 (GVIDEDY), G108, R151, and 156 to 157 (FG).

This sequence belongs to the dUTPase family. In terms of assembly, homotrimer. Mg(2+) serves as cofactor. Post-translationally, phosphorylated in vivo on Ser-11, a reaction that can be catalyzed in vitro by CDC2.

It is found in the nucleus. It catalyses the reaction dUTP + H2O = dUMP + diphosphate + H(+). The protein operates within pyrimidine metabolism; dUMP biosynthesis; dUMP from dCTP (dUTP route): step 2/2. Functionally, catalyzes the cleavage of 2'-deoxyuridine 5'-triphosphate (dUTP) into 2'-deoxyuridine 5'-monophosphate (dUMP) and inorganic pyrophosphate and through its action efficiently prevents uracil misincorporation into DNA and at the same time provides dUMP, the substrate for de novo thymidylate biosynthesis. Inhibits peroxisome proliferator-activated receptor (PPAR) activity by binding of its N-terminal to PPAR, preventing the latter's dimerization with retinoid X receptor. Essential for embryonic development. The chain is Deoxyuridine 5'-triphosphate nucleotidohydrolase (Dut) from Mus musculus (Mouse).